A 424-amino-acid polypeptide reads, in one-letter code: Tyrosine--tRNA ligase (424 aa).

L-tyrosine is bound at residue Y37. The 'HIGH' region signature appears at 42–51 (PTADSLHLGH). 2 residues coordinate L-tyrosine: Y175 and Q179. A 'KMSKS' region motif is present at residues 235–239 (KFGKT). K238 lines the ATP pocket. In terms of domain architecture, S4 RNA-binding spans 357–414 (ADLQQALVNAELVPSRGQARTMISSNAVAINGEKQSDPEYAFTDADRLFGRYTLLRRG).

Belongs to the class-I aminoacyl-tRNA synthetase family. TyrS type 1 subfamily. As to quaternary structure, homodimer.

It is found in the cytoplasm. The catalysed reaction is tRNA(Tyr) + L-tyrosine + ATP = L-tyrosyl-tRNA(Tyr) + AMP + diphosphate + H(+). Functionally, catalyzes the attachment of tyrosine to tRNA(Tyr) in a two-step reaction: tyrosine is first activated by ATP to form Tyr-AMP and then transferred to the acceptor end of tRNA(Tyr). In Yersinia enterocolitica serotype O:8 / biotype 1B (strain NCTC 13174 / 8081), this protein is Tyrosine--tRNA ligase.